A 657-amino-acid polypeptide reads, in one-letter code: 1-deoxy-D-xylulose-5-phosphate synthase (657 aa).

Thiamine diphosphate is bound by residues His73 and 113–115; that span reads SHA. Asp145 contributes to the Mg(2+) binding site. Residues 146–147, Asn175, Tyr293, and Glu375 contribute to the thiamine diphosphate site; that span reads GA. Asn175 lines the Mg(2+) pocket.

It belongs to the transketolase family. DXPS subfamily. In terms of assembly, homodimer. Mg(2+) serves as cofactor. Requires thiamine diphosphate as cofactor.

It carries out the reaction D-glyceraldehyde 3-phosphate + pyruvate + H(+) = 1-deoxy-D-xylulose 5-phosphate + CO2. The protein operates within metabolic intermediate biosynthesis; 1-deoxy-D-xylulose 5-phosphate biosynthesis; 1-deoxy-D-xylulose 5-phosphate from D-glyceraldehyde 3-phosphate and pyruvate: step 1/1. Functionally, catalyzes the acyloin condensation reaction between C atoms 2 and 3 of pyruvate and glyceraldehyde 3-phosphate to yield 1-deoxy-D-xylulose-5-phosphate (DXP). The polypeptide is 1-deoxy-D-xylulose-5-phosphate synthase (Renibacterium salmoninarum (strain ATCC 33209 / DSM 20767 / JCM 11484 / NBRC 15589 / NCIMB 2235)).